A 150-amino-acid polypeptide reads, in one-letter code: Large ribosomal subunit protein uL15 (150 aa).

This sequence belongs to the universal ribosomal protein uL15 family. Part of the 50S ribosomal subunit.

Functionally, binds to the 23S rRNA. This Anaplasma marginale (strain Florida) protein is Large ribosomal subunit protein uL15.